The chain runs to 339 residues: Phosphoribosylformylglycinamidine cyclo-ligase (339 aa).

The protein belongs to the AIR synthase family.

The protein localises to the cytoplasm. It catalyses the reaction 2-formamido-N(1)-(5-O-phospho-beta-D-ribosyl)acetamidine + ATP = 5-amino-1-(5-phospho-beta-D-ribosyl)imidazole + ADP + phosphate + H(+). It functions in the pathway purine metabolism; IMP biosynthesis via de novo pathway; 5-amino-1-(5-phospho-D-ribosyl)imidazole from N(2)-formyl-N(1)-(5-phospho-D-ribosyl)glycinamide: step 2/2. The polypeptide is Phosphoribosylformylglycinamidine cyclo-ligase (Desulfitobacterium hafniense (strain DSM 10664 / DCB-2)).